The sequence spans 377 residues: MSEVFDLTCDLISRPSVTPEDAGCQAMIAARLERVGFTCEHLHYGSVANLWATHGQGAPVLVLLGHTDVVPPGPIEAWTSDPFIPQRREGKLYGRGAADMKGSVAAFVIAAERFLVAHAGHPGTLAILLTSDEEGQAIDGVRKVAETLRQRGQGIDWCLTGEPSSSKRLGDLLRVGRRGSLSATLHVKGVQGHVAYPHQARNPIHLAVPALAALTARHWDDGDESFPSTSLQISNIHAGTGANNVIPGALEVAFNLRYNPHWSAPRLESEIVALLDQHGLDYTLHWHRSGEPFYTPEGKLRRIAREVLERFSGAPPEESTGGGTSDARFIAPLGAQCIEIGPVNASIHQVDEHVCLADLEALPDLYQLLIERLLADH.

Histidine 66 is a binding site for Zn(2+). Residue aspartate 68 is part of the active site. Zn(2+) is bound at residue aspartate 99. Glutamate 133 (proton acceptor) is an active-site residue. Zn(2+) is bound by residues glutamate 134, glutamate 162, and histidine 348.

The protein belongs to the peptidase M20A family. DapE subfamily. As to quaternary structure, homodimer. Requires Zn(2+) as cofactor. Co(2+) is required as a cofactor.

The catalysed reaction is N-succinyl-(2S,6S)-2,6-diaminopimelate + H2O = (2S,6S)-2,6-diaminopimelate + succinate. It functions in the pathway amino-acid biosynthesis; L-lysine biosynthesis via DAP pathway; LL-2,6-diaminopimelate from (S)-tetrahydrodipicolinate (succinylase route): step 3/3. Its function is as follows. Catalyzes the hydrolysis of N-succinyl-L,L-diaminopimelic acid (SDAP), forming succinate and LL-2,6-diaminopimelate (DAP), an intermediate involved in the bacterial biosynthesis of lysine and meso-diaminopimelic acid, an essential component of bacterial cell walls. This Xylella fastidiosa (strain 9a5c) protein is Succinyl-diaminopimelate desuccinylase.